The sequence spans 611 residues: Procollagen galactosyltransferase 1-B (611 aa).

Residues Met1–Ala24 form the signal peptide. N-linked (GlcNAc...) asparagine glycans are attached at residues Asn85, Asn173, Asn370, Asn373, and Asn568. Residues Asp576–Ser591 show a composition bias toward basic and acidic residues. Residues Asp576–Leu611 are disordered. The short motif at Arg608–Leu611 is the Prevents secretion from ER element.

The protein belongs to the glycosyltransferase 25 family.

It is found in the endoplasmic reticulum lumen. It catalyses the reaction (5R)-5-hydroxy-L-lysyl-[collagen] + UDP-alpha-D-galactose = (5R)-5-O-(beta-D-galactosyl)-5-hydroxy-L-lysyl-[collagen] + UDP + H(+). In terms of biological role, beta-galactosyltransferase that transfers beta-galactose to hydroxylysine residues of type I collagen. By acting on collagen glycosylation, facilitates the formation of collagen triple helix. The protein is Procollagen galactosyltransferase 1-B (colgalt1-b) of Xenopus laevis (African clawed frog).